The chain runs to 146 residues: Hemoglobin subunit beta (146 aa).

Position 1 is an N-acetylvaline (Val-1). Residues 2-146 (HLSGGEKSAV…VAHALGHKYH (145 aa)) enclose the Globin domain. At Thr-12 the chain carries Phosphothreonine. Lys-59 bears the N6-acetyllysine mark. His-63 is a heme b binding site. Lys-82 carries the post-translational modification N6-acetyllysine. Position 92 (His-92) interacts with heme b. At Cys-93 the chain carries S-nitrosocysteine. Residue Lys-144 is modified to N6-acetyllysine.

This sequence belongs to the globin family. Heterotetramer of two alpha chains and two beta chains. In terms of tissue distribution, red blood cells.

Involved in oxygen transport from the lung to the various peripheral tissues. In Ornithorhynchus anatinus (Duckbill platypus), this protein is Hemoglobin subunit beta (HBB).